The primary structure comprises 617 residues: UvrABC system protein C (617 aa).

The region spanning 11-85 (TTPGVYIFRK…IKQHRPHYNV (75 aa)) is the GIY-YIG domain. The region spanning 194 to 229 (APVIARLKEDMKVAAQGQDFEQAARLRDRVQAVEKL) is the UVR domain.

The protein belongs to the UvrC family. Interacts with UvrB in an incision complex.

Its subcellular location is the cytoplasm. Its function is as follows. The UvrABC repair system catalyzes the recognition and processing of DNA lesions. UvrC both incises the 5' and 3' sides of the lesion. The N-terminal half is responsible for the 3' incision and the C-terminal half is responsible for the 5' incision. This Deinococcus radiodurans (strain ATCC 13939 / DSM 20539 / JCM 16871 / CCUG 27074 / LMG 4051 / NBRC 15346 / NCIMB 9279 / VKM B-1422 / R1) protein is UvrABC system protein C.